The sequence spans 202 residues: HTH-type transcriptional regulator BetI (202 aa).

The region spanning 8–68 (PIRRRQLIDA…ATMRDITRQL (61 aa)) is the HTH tetR-type domain. The segment at residues 31–50 (TIAQIARRAGVSAGIISHYF) is a DNA-binding region (H-T-H motif).

It participates in amine and polyamine biosynthesis; betaine biosynthesis via choline pathway [regulation]. Its function is as follows. Repressor involved in the biosynthesis of the osmoprotectant glycine betaine. It represses transcription of the choline transporter BetT and the genes of BetAB involved in the synthesis of glycine betaine. In Cronobacter sakazakii (strain ATCC BAA-894) (Enterobacter sakazakii), this protein is HTH-type transcriptional regulator BetI.